Here is a 330-residue protein sequence, read N- to C-terminus: MRYEVDTKRRIIKLVPEREEDLYFIYLLIDKGDIIRGWTVREYKPDGVKEGERIKIYLAIKVESLEYHKFRGSLRIRGTVVEVQDGIEGVKGRRHTFDVTPGREIEIEKAYDYPLDVVIEVLNMAKAVLPRVLLISVDDEETVFAYITALGVEILHTMYNTGRKDDSMFEEYFTAIKEVVDELKRRHKPDIVVLAGPSMIIEQASEYIQAIKVPQGSGGLAGVYEFIRGGLYEKFKIEMGINVYQRFIHKLSVDRLSVAIGLNEVREATDAGRIETVLVLDTLIKERPEDIWPLLAQVYKTRGKIHIVKEDSEVGAGLKAMGGVVALLRW.

It belongs to the eukaryotic release factor 1 family. Pelota subfamily. In terms of assembly, monomer. A divalent metal cation serves as cofactor.

The protein localises to the cytoplasm. In terms of biological role, may function in recognizing stalled ribosomes, interact with stem-loop structures in stalled mRNA molecules, and effect endonucleolytic cleavage of the mRNA. May play a role in the release non-functional ribosomes and degradation of damaged mRNAs. Has endoribonuclease activity. This chain is Protein pelota homolog, found in Pyrobaculum islandicum (strain DSM 4184 / JCM 9189 / GEO3).